The primary structure comprises 313 residues: tRNA dimethylallyltransferase (313 aa).

10-17 (GPTASGKT) lines the ATP pocket. 12–17 (TASGKT) contacts substrate. Interaction with substrate tRNA regions lie at residues 35-38 (DSAM), 159-163 (QRIQR), and 240-245 (RCVGYR).

This sequence belongs to the IPP transferase family. In terms of assembly, monomer. It depends on Mg(2+) as a cofactor.

The catalysed reaction is adenosine(37) in tRNA + dimethylallyl diphosphate = N(6)-dimethylallyladenosine(37) in tRNA + diphosphate. Catalyzes the transfer of a dimethylallyl group onto the adenine at position 37 in tRNAs that read codons beginning with uridine, leading to the formation of N6-(dimethylallyl)adenosine (i(6)A). This chain is tRNA dimethylallyltransferase, found in Legionella pneumophila (strain Corby).